The primary structure comprises 257 residues: Phosphate import ATP-binding protein PstB (257 aa).

Positions 4 to 246 constitute an ABC transporter domain; the sequence is LKLNDVNIYY…KKIFENPDQK (243 aa). An ATP-binding site is contributed by 36–43; sequence GPSGCGKS.

The protein belongs to the ABC transporter superfamily. Phosphate importer (TC 3.A.1.7) family. In terms of assembly, the complex is composed of two ATP-binding proteins (PstB), two transmembrane proteins (PstC and PstA) and a solute-binding protein (PstS).

It localises to the cell membrane. The enzyme catalyses phosphate(out) + ATP + H2O = ADP + 2 phosphate(in) + H(+). In terms of biological role, part of the ABC transporter complex PstSACB involved in phosphate import. Responsible for energy coupling to the transport system. This Corynebacterium glutamicum (strain ATCC 13032 / DSM 20300 / JCM 1318 / BCRC 11384 / CCUG 27702 / LMG 3730 / NBRC 12168 / NCIMB 10025 / NRRL B-2784 / 534) protein is Phosphate import ATP-binding protein PstB.